The sequence spans 158 residues: NADPH-dependent 7-cyano-7-deazaguanine reductase (158 aa).

Cys-56 acts as the Thioimide intermediate in catalysis. Asp-63 (proton donor) is an active-site residue. Residues 78–80 (LES) and 97–98 (HE) each bind substrate.

This sequence belongs to the GTP cyclohydrolase I family. QueF type 1 subfamily.

The protein resides in the cytoplasm. The catalysed reaction is 7-aminomethyl-7-carbaguanine + 2 NADP(+) = 7-cyano-7-deazaguanine + 2 NADPH + 3 H(+). It participates in tRNA modification; tRNA-queuosine biosynthesis. Catalyzes the NADPH-dependent reduction of 7-cyano-7-deazaguanine (preQ0) to 7-aminomethyl-7-deazaguanine (preQ1). This Nitrobacter winogradskyi (strain ATCC 25391 / DSM 10237 / CIP 104748 / NCIMB 11846 / Nb-255) protein is NADPH-dependent 7-cyano-7-deazaguanine reductase.